Reading from the N-terminus, the 309-residue chain is Uricase-2 isozyme 2 (309 aa).

Residues K18 and T64 each act as charge relay system in the active site. 7 residues coordinate urate: T64, D65, F166, R183, V238, Q239, and N265. The active-site Charge relay system is H267.

The protein belongs to the uricase family. Homotetramer.

It localises to the peroxisome. The catalysed reaction is urate + O2 + H2O = 5-hydroxyisourate + H2O2. The protein operates within purine metabolism; urate degradation; (S)-allantoin from urate: step 1/3. Functionally, catalyzes the oxidation of uric acid to 5-hydroxyisourate, which is further processed to form (S)-allantoin. The protein is Uricase-2 isozyme 2 of Glycine max (Soybean).